The sequence spans 198 residues: Probable chemoreceptor glutamine deamidase CheD (198 aa).

Belongs to the CheD family.

It carries out the reaction L-glutaminyl-[protein] + H2O = L-glutamyl-[protein] + NH4(+). Probably deamidates glutamine residues to glutamate on methyl-accepting chemotaxis receptors (MCPs), playing an important role in chemotaxis. The sequence is that of Probable chemoreceptor glutamine deamidase CheD from Stenotrophomonas maltophilia (strain K279a).